A 308-amino-acid chain; its full sequence is Heme A synthase (308 aa).

At 1–8 the chain is on the cytoplasmic side; the sequence is MFKKRNLK. A helical membrane pass occupies residues 9-29; sequence WLSILATVIMAWVQLGGALVT. The Extracellular segment spans residues 30–67; the sequence is KTGSENGCGASWPLCHGALLPQNLPIATIIELSHRATS. A disulfide bond links C37 and C44. E60 is an active-site residue. Residue H63 coordinates heme o. Residues 68–88 form a helical membrane-spanning segment; sequence ALSLIVVLWLVITAWKNIGYI. The Cytoplasmic segment spans residues 89–93; the sequence is KEVKP. Residues 94–114 form a helical membrane-spanning segment; that stretch reads LCIISVAFLLIQALVGAAAVL. The Extracellular portion of the chain corresponds to 115-123; the sequence is WQQNDYVLA. Residues 124–144 traverse the membrane as a helical segment; the sequence is LHFGISLISFSSVFVLTLIIF. H125 contacts heme o. At 145–161 the chain is on the cytoplasmic side; it reads DVDQKYEANKVHIDRKL. Residues 162–182 traverse the membrane as a helical segment; it reads RIYTWTMAICLYVGIYTGALV. At 183–215 the chain is on the extracellular side; it reads RHTKSSLAYGSWPLPFNDLIPHTEQDWVQLAHR. Residue H214 coordinates heme b. A helical membrane pass occupies residues 216–236; sequence TLALIASISVFLAFNYAIKHY. Topologically, residues 237-244 are cytoplasmic; it reads QNNRTIRY. The helical transmembrane segment at 245 to 265 threads the bilayer; sequence GYTAALLLIILQIVTGALSIF. Residues 266–270 are Extracellular-facing; the sequence is THVNL. A helical membrane pass occupies residues 271 to 291; that stretch reads IIALLHALIITFEFGLIAYLI. H276 is a binding site for heme b. Residues 292 to 308 are Cytoplasmic-facing; that stretch reads VLLLRSQRVEKVKQNAY.

Belongs to the COX15/CtaA family. Type 1 subfamily. Interacts with CtaB. Heme b serves as cofactor.

The protein localises to the cell membrane. The catalysed reaction is Fe(II)-heme o + 2 A + H2O = Fe(II)-heme a + 2 AH2. It functions in the pathway porphyrin-containing compound metabolism; heme A biosynthesis; heme A from heme O: step 1/1. Its function is as follows. Catalyzes the conversion of heme O to heme A by two successive hydroxylations of the methyl group at C8. The first hydroxylation forms heme I, the second hydroxylation results in an unstable dihydroxymethyl group, which spontaneously dehydrates, resulting in the formyl group of heme A. The polypeptide is Heme A synthase (Staphylococcus carnosus (strain TM300)).